Here is a 418-residue protein sequence, read N- to C-terminus: Serine/threonine-protein kinase PCRK1 (418 aa).

The segment at 36 to 63 is disordered; sequence GSEFNSRDVSGTSTESSMGRKNSYPPVS. A Protein kinase domain is found at 84–369; that stretch reads FSRSVMIGEG…EVLEMVNKIV (286 aa). ATP-binding positions include 90–98 and K118; that span reads IGEGGFGCV. The active-site Proton acceptor is D218. Phosphoserine is present on residues S373, S377, and S385.

This sequence belongs to the protein kinase superfamily. Ser/Thr protein kinase family. Interacts with FLS2.

Its subcellular location is the cell membrane. It catalyses the reaction L-seryl-[protein] + ATP = O-phospho-L-seryl-[protein] + ADP + H(+). The enzyme catalyses L-threonyl-[protein] + ATP = O-phospho-L-threonyl-[protein] + ADP + H(+). Its function is as follows. Involved in the activation of early immune responses. Plays a role in pattern-triggered immunity (PTI) induced by pathogen-associated molecular patterns (PAMPs) and damage-associated molecular patterns (DAMPs). Contributes to PTI in response to the bacterial pathogen Pseudomonas syringae pv maculicola strain ES4326. Contributes to PTI in response to the bacterial pathogen Pseudomonas syringae pv tomato strain DC3000. Functions redundantly with PCRK2 in basal resistance against bacterial pathogens and in regulation of plant immunity. Functions together with PCRK2 downstream of the PAMP receptor FLS2. Contributes to the induction of SARD1 and CBP60G, which are transcriptional activator of ICS1, an enzyme involved in salicylate (SA) biosynthesis upon pathogen attack. This is Serine/threonine-protein kinase PCRK1 from Arabidopsis thaliana (Mouse-ear cress).